The chain runs to 231 residues: MSEIKDVIVQGLWKNNSALVQLLGLCPLLAVTSTATNALGLGLATTLVLTLTNLTISTLRHWTPAEIRIPIYVMIIASVVSAVQMLINAYAFGLYQSLGIFIPLIVTNCIVVGRAEAFAAKKGPALSALDGFSIGMGATCAMFVLGSLREIIGNGTLFDGADALLGSWAKVLRVEIFHTDSPFLLAMLPPGAFIGLGLMLAGKYLIDERMKKRRAEATAERALPNGETGNV.

6 consecutive transmembrane segments (helical) span residues 18 to 38 (ALVQ…ATNA), 39 to 59 (LGLG…ISTL), 63 to 83 (TPAE…VSAV), 86 to 106 (LINA…PLIV), 125 to 145 (ALSA…MFVL), and 182 to 202 (PFLL…MLAG).

The protein belongs to the NqrDE/RnfAE family. The complex is composed of six subunits: RsxA, RsxB, RsxC, RsxD, RsxE and RsxG.

Its subcellular location is the cell inner membrane. In terms of biological role, part of a membrane-bound complex that couples electron transfer with translocation of ions across the membrane. Required to maintain the reduced state of SoxR. The chain is Ion-translocating oxidoreductase complex subunit E from Escherichia coli (strain SE11).